Consider the following 4451-residue polypeptide: Gramicidin S synthase 2 (4451 aa).

The segment at 467–1044 (DKTIHQLFTE…IQEISNYING (578 aa)) is domain 1 (proline-activating). 4 consecutive Carrier domains span residues 971–1046 (VPTN…NGAK), 2006–2081 (APSS…ADGQ), 3052–3127 (RPRT…EETD), and 4090–4165 (APRN…THQE). An O-(pantetheine 4'-phosphoryl)serine mark is found at serine 1006, serine 2041, serine 3087, and serine 4125. Residues 1521–2080 (DHVAVGWKDQ…SALAQYIADG (560 aa)) form a domain 2 (valine-activating) region. The tract at residues 2538 to 3135 (YATNKIFHEL…TDTEQYMAIQ (598 aa)) is domain 3 (ornithine-activating). The segment at 3591 to 4173 (IQELFEEQVK…QESENNVHQP (583 aa)) is domain 4 (leucine-activating).

Belongs to the ATP-dependent AMP-binding enzyme family. Large multienzyme complex of GrsA and GrsB. Requires pantetheine 4'-phosphate as cofactor.

It participates in antibiotic biosynthesis; gramicidin S biosynthesis. This protein is a multifunctional enzyme, able to activate and polymerize the amino acids Pro, Val, Orn and Leu. Activation sites for these AA consist of individual domains. This Aneurinibacillus migulanus (Bacillus migulanus) protein is Gramicidin S synthase 2 (grsB).